A 266-amino-acid chain; its full sequence is GATA zinc finger domain-containing protein 1 (266 aa).

Residues 9–33 form a GATA-type zinc finger; that stretch reads CSMCKTTSSSMWKKSPQGEILCHHC. Over residues 59–72 the composition is skewed to low complexity; sequence TTTFATTSAGPSQS. A disordered region spans residues 59–112; the sequence is TTTFATTSAGPSQSNGGGGGKQSKQEIHRRSARLRNTKYKSAPAAEKKVSTKGK. Residue Lys259 forms a Glycyl lysine isopeptide (Lys-Gly) (interchain with G-Cter in SUMO2) linkage.

Component of a chromatin complex, at least composed of KDM5A, GATAD1 and EMSY. In terms of tissue distribution, expressed in the eye (lens, ciliary body, retina, sclera and conjunctiva) at postnatal day 2 and 10. Not detected anywhere at postnatal day 14.

The protein localises to the nucleus. Component of some chromatin complex recruited to chromatin sites methylated 'Lys-4' of histone H3 (H3K4me), with a preference for trimethylated form (H3K4me3). This chain is GATA zinc finger domain-containing protein 1 (Gatad1), found in Mus musculus (Mouse).